Reading from the N-terminus, the 359-residue chain is Methylthioribose-1-phosphate isomerase (359 aa).

Aspartate 235 (proton donor) is an active-site residue.

Belongs to the eIF-2B alpha/beta/delta subunits family. MtnA subfamily.

The protein localises to the cytoplasm. It localises to the nucleus. The catalysed reaction is 5-(methylsulfanyl)-alpha-D-ribose 1-phosphate = 5-(methylsulfanyl)-D-ribulose 1-phosphate. Its pathway is amino-acid biosynthesis; L-methionine biosynthesis via salvage pathway; L-methionine from S-methyl-5-thio-alpha-D-ribose 1-phosphate: step 1/6. Catalyzes the interconversion of methylthioribose-1-phosphate (MTR-1-P) into methylthioribulose-1-phosphate (MTRu-1-P). This Schizosaccharomyces pombe (strain 972 / ATCC 24843) (Fission yeast) protein is Methylthioribose-1-phosphate isomerase (mri1).